The chain runs to 651 residues: Acetyl-coenzyme A synthetase (651 aa).

CoA contacts are provided by residues 190–193 (RRGK) and Thr311. ATP is bound by residues 387-389 (GEP), 411-416 (DTWWQT), Asp508, and Arg523. Ser531 provides a ligand contact to CoA. Residue Arg534 coordinates ATP. Residues Val545, His547, and Val550 each coordinate Mg(2+). Position 617 is an N6-acetyllysine (Lys617).

It belongs to the ATP-dependent AMP-binding enzyme family. Mg(2+) serves as cofactor. Acetylated. Deacetylation by the SIR2-homolog deacetylase activates the enzyme.

The enzyme catalyses acetate + ATP + CoA = acetyl-CoA + AMP + diphosphate. In terms of biological role, catalyzes the conversion of acetate into acetyl-CoA (AcCoA), an essential intermediate at the junction of anabolic and catabolic pathways. AcsA undergoes a two-step reaction. In the first half reaction, AcsA combines acetate with ATP to form acetyl-adenylate (AcAMP) intermediate. In the second half reaction, it can then transfer the acetyl group from AcAMP to the sulfhydryl group of CoA, forming the product AcCoA. M.tuberculosis may use AcsA for both acetate and propionate assimilation. The polypeptide is Acetyl-coenzyme A synthetase (Mycobacterium tuberculosis (strain CDC 1551 / Oshkosh)).